The following is a 507-amino-acid chain: MQQAIEQTATGGALRFNGICKVFPGVKALSDISFEARPGSVHALMGENGAGKSTLLKILGGSYQPNSGTLQIGEHSYQFKSTAESIAAGVAVIHQELHLVPEMTVAENLLLGHMPNRFGLINRGAMYRRAGELLKGLADEIDPRTRLGDLSLGQRQLVEIAKAMSRNAHVIAFDEPTSSLSAREIDRLMAIIVRLRDEGRVILYVSHRMEEIFRVCDAVTVFKDGRFVKTFEQMADLDHDRLVTCMVGRDIQDIYNYRPRQHQGPSLRVTGLLGLGLQEPVSFAVQKGEVLGFFGLVGAGRTELFRILSGLTRSTAGSLQLDGQPLTLKSPRDAIAAGVLLCPEDRKKEGIVPLSSVAENINIGARPRHVNLGCLIQGGWERDNARAQIKSMNVKTPSPEQQIMFLSGGNQQKAILGRWLSMPMKVLLLDEPTRGIDVGAKSEIYEIIHTLAADGIAVIVVSSDLMEVMGISDRILVMSEGAITGELNRDEADESRLLQLALPRTRG.

2 consecutive ABC transporter domains span residues 14 to 249 (LRFN…MVGR) and 249 to 505 (RDIQ…LPRT). Residue 46 to 53 (GENGAGKS) coordinates ATP.

The protein belongs to the ABC transporter superfamily. Arabinose importer (TC 3.A.1.2.2) family. As to quaternary structure, the complex is composed of two ATP-binding proteins (AraG), two transmembrane proteins (AraH) and a solute-binding protein (AraF).

Its subcellular location is the cell inner membrane. It catalyses the reaction L-arabinose(out) + ATP + H2O = L-arabinose(in) + ADP + phosphate + H(+). Part of the ABC transporter complex AraFGH involved in arabinose import. Responsible for energy coupling to the transport system. This Pseudomonas syringae pv. tomato (strain ATCC BAA-871 / DC3000) protein is Arabinose import ATP-binding protein AraG.